The following is a 623-amino-acid chain: F-box protein FBX14 (623 aa).

Residues 18 to 48 (LNLNPPCSSSSSSSSAATFTNKSRNFKSSPP) are disordered. Over residues 33–45 (AATFTNKSRNFKS) the composition is skewed to polar residues. Residues 54–97 (VLENVLENVLQFLTSRCDRNAVSLVCRSWYRVEAQTRLEVFIGN) enclose the F-box domain. Lys-119 is a binding site for 1D-myo-inositol hexakisphosphate. The interval 126 to 127 (DF) is interaction with auxin-responsive proteins. Residues 158-159 (KR) and Arg-391 each bind 1D-myo-inositol hexakisphosphate. Residues 394-399 (PFDPRE) form an interaction with auxin-responsive proteins region. 447 to 449 (VFR) contacts 1D-myo-inositol hexakisphosphate. An interaction with auxin-responsive proteins region spans residues 451 to 455 (CIMGR). Arg-482 lines the 1D-myo-inositol hexakisphosphate pocket. The interval 510–511 (AF) is interaction with auxin-responsive proteins. Residues 530 to 531 (QK) and Arg-555 contribute to the 1D-myo-inositol hexakisphosphate site.

Part of a SCF (SKP1-cullin-F-box) protein ligase complex. May interact with auxin and auxin-responsive proteins.

It is found in the nucleus. It functions in the pathway protein modification; protein ubiquitination. This is F-box protein FBX14 (FBX14) from Arabidopsis thaliana (Mouse-ear cress).